The following is a 501-amino-acid chain: Aspartyl/glutamyl-tRNA(Asn/Gln) amidotransferase subunit B (501 aa).

Positions 276-299 (HYQEADGSTSKGRPKETAEDYRYF) are disordered. Basic and acidic residues predominate over residues 288-299 (RPKETAEDYRYF).

Belongs to the GatB/GatE family. GatB subfamily. In terms of assembly, heterotrimer of A, B and C subunits.

It catalyses the reaction L-glutamyl-tRNA(Gln) + L-glutamine + ATP + H2O = L-glutaminyl-tRNA(Gln) + L-glutamate + ADP + phosphate + H(+). It carries out the reaction L-aspartyl-tRNA(Asn) + L-glutamine + ATP + H2O = L-asparaginyl-tRNA(Asn) + L-glutamate + ADP + phosphate + 2 H(+). In terms of biological role, allows the formation of correctly charged Asn-tRNA(Asn) or Gln-tRNA(Gln) through the transamidation of misacylated Asp-tRNA(Asn) or Glu-tRNA(Gln) in organisms which lack either or both of asparaginyl-tRNA or glutaminyl-tRNA synthetases. The reaction takes place in the presence of glutamine and ATP through an activated phospho-Asp-tRNA(Asn) or phospho-Glu-tRNA(Gln). This is Aspartyl/glutamyl-tRNA(Asn/Gln) amidotransferase subunit B from Corynebacterium glutamicum (strain R).